Here is a 127-residue protein sequence, read N- to C-terminus: DNA-directed RNA polymerase subunit omega (127 aa).

Belongs to the RNA polymerase subunit omega family. In terms of assembly, the RNAP catalytic core consists of 2 alpha, 1 beta, 1 beta' and 1 omega subunit. When a sigma factor is associated with the core the holoenzyme is formed, which can initiate transcription.

It carries out the reaction RNA(n) + a ribonucleoside 5'-triphosphate = RNA(n+1) + diphosphate. In terms of biological role, promotes RNA polymerase assembly. Latches the N- and C-terminal regions of the beta' subunit thereby facilitating its interaction with the beta and alpha subunits. The protein is DNA-directed RNA polymerase subunit omega of Rickettsia rickettsii (strain Iowa).